A 204-amino-acid polypeptide reads, in one-letter code: Inner membrane protein YagU (204 aa).

Residues 1-14 (MNIFEQTPPNRRRY) are Periplasmic-facing. The chain crosses the membrane as a helical span at residues 15–35 (GLAAFIGLIAGVVSAFVKWGA). The Cytoplasmic portion of the chain corresponds to 36-100 (EVPLPPRSPV…VYTFAGHVFN (65 aa)). A helical membrane pass occupies residues 101 to 121 (WVGVTHIIFSIVFAVGYCVVA). At 122 to 132 (EVFPKIKLWQG) the chain is on the periplasmic side. Residues 133-153 (LLAGALAQLFVHMISFPLMGL) traverse the membrane as a helical segment. Residues 154–204 (TPPLFDLPWYENVSEIFGHLVWFWSIEIIRRDLRNRITHEPDPEIPLGSNR) lie on the Cytoplasmic side of the membrane.

In terms of assembly, homodimer.

It localises to the cell inner membrane. In Escherichia coli (strain K12), this protein is Inner membrane protein YagU (yagU).